The chain runs to 568 residues: 2-succinyl-5-enolpyruvyl-6-hydroxy-3-cyclohexene-1-carboxylate synthase (568 aa).

This sequence belongs to the TPP enzyme family. MenD subfamily. In terms of assembly, homodimer. Mg(2+) is required as a cofactor. The cofactor is Mn(2+). Requires thiamine diphosphate as cofactor.

It carries out the reaction isochorismate + 2-oxoglutarate + H(+) = 5-enolpyruvoyl-6-hydroxy-2-succinyl-cyclohex-3-ene-1-carboxylate + CO2. It participates in quinol/quinone metabolism; 1,4-dihydroxy-2-naphthoate biosynthesis; 1,4-dihydroxy-2-naphthoate from chorismate: step 2/7. It functions in the pathway quinol/quinone metabolism; menaquinone biosynthesis. In terms of biological role, catalyzes the thiamine diphosphate-dependent decarboxylation of 2-oxoglutarate and the subsequent addition of the resulting succinic semialdehyde-thiamine pyrophosphate anion to isochorismate to yield 2-succinyl-5-enolpyruvyl-6-hydroxy-3-cyclohexene-1-carboxylate (SEPHCHC). In Haemophilus influenzae (strain 86-028NP), this protein is 2-succinyl-5-enolpyruvyl-6-hydroxy-3-cyclohexene-1-carboxylate synthase.